The chain runs to 215 residues: Leucyl/phenylalanyl-tRNA--protein transferase (215 aa).

This sequence belongs to the L/F-transferase family.

It is found in the cytoplasm. It carries out the reaction N-terminal L-lysyl-[protein] + L-leucyl-tRNA(Leu) = N-terminal L-leucyl-L-lysyl-[protein] + tRNA(Leu) + H(+). It catalyses the reaction N-terminal L-arginyl-[protein] + L-leucyl-tRNA(Leu) = N-terminal L-leucyl-L-arginyl-[protein] + tRNA(Leu) + H(+). The enzyme catalyses L-phenylalanyl-tRNA(Phe) + an N-terminal L-alpha-aminoacyl-[protein] = an N-terminal L-phenylalanyl-L-alpha-aminoacyl-[protein] + tRNA(Phe). In terms of biological role, functions in the N-end rule pathway of protein degradation where it conjugates Leu, Phe and, less efficiently, Met from aminoacyl-tRNAs to the N-termini of proteins containing an N-terminal arginine or lysine. The chain is Leucyl/phenylalanyl-tRNA--protein transferase from Campylobacter jejuni subsp. jejuni serotype O:2 (strain ATCC 700819 / NCTC 11168).